Here is a 355-residue protein sequence, read N- to C-terminus: MTALKNDRFLRALLKQPVDVTPIWMMRQAGRYLPEYRATRAKAGDFVSLMKNPELACEVTIQPLDRYPQLDAAILFSDILTIPDAMGQGLYFETGEGPRFKKAVGSLADIEALPVPDPEKDLGYVMDAVRTIRRELNGRVPLIGFSGSPWTLATYMVEGGSSKDFRKSKAMLYDNPQAMHALLDKLAQSVTAYLNGQILAGAQAVQIFDSWGGALSAAAYQEFSLAYMKKIVDGLIREHDGRRVPVILFTKGGGLWLESMADSGAEALGLDWTCDIGSARARVGSKVALQGNMDPAVLYAKPAAIRAEVARILAAYGAGSGHVFNLGHGITPEVDPAHAGAFFEAVHELSAAYHR.

Substrate is bound by residues 27-31 (RQAGR), Asp78, Tyr155, Ser210, and His328.

This sequence belongs to the uroporphyrinogen decarboxylase family. Homodimer.

Its subcellular location is the cytoplasm. It catalyses the reaction uroporphyrinogen III + 4 H(+) = coproporphyrinogen III + 4 CO2. Its pathway is porphyrin-containing compound metabolism; protoporphyrin-IX biosynthesis; coproporphyrinogen-III from 5-aminolevulinate: step 4/4. In terms of biological role, catalyzes the decarboxylation of four acetate groups of uroporphyrinogen-III to yield coproporphyrinogen-III. This is Uroporphyrinogen decarboxylase from Ectopseudomonas mendocina (strain ymp) (Pseudomonas mendocina).